The following is a 94-amino-acid chain: MIHSPTLKKNLFVANHLRAKINKLNNKKKKEIIVTWSRASTIIPIMIGHMISIHNGKEHLPIYITDHMVGHKLGEFVPTLNFRGHAKSDNRSRR.

It belongs to the universal ribosomal protein uS19 family.

It localises to the plastid. Functionally, protein S19 forms a complex with S13 that binds strongly to the 16S ribosomal RNA. The polypeptide is Small ribosomal subunit protein uS19c (rps19) (Epifagus virginiana (Beechdrops)).